Here is a 353-residue protein sequence, read N- to C-terminus: Chemerin-like receptor 2 (353 aa).

At 1–41 (MEVSREMLFEELDNYSYALEYYSQEPDAEENVYPGIVHWIS) the chain is on the extracellular side. An N-linked (GlcNAc...) asparagine glycan is attached at Asn14. Residues 42-62 (LLLYALAFVLGIPGNAIVIWF) traverse the membrane as a helical segment. At 63–73 (MGFKWKKTVTT) the chain is on the cytoplasmic side. A helical membrane pass occupies residues 74-94 (LWFLNLAIADFVFVLFLPLYI). Residues 95–112 (SYVALSFHWPFGRWLCKL) lie on the Extracellular side of the membrane. Cysteines 110 and 187 form a disulfide. The chain crosses the membrane as a helical span at residues 113–133 (NSFIAQLNMFSSVFFLTVISL). At 134–154 (DRYIHLIHPGLSHPHRTLKNS) the chain is on the cytoplasmic side. The chain crosses the membrane as a helical span at residues 155–175 (LLVVLFVWLLASLLGGPTLYF). Topologically, residues 176–210 (RDTVEVNNRIICYNNFQEYELTLMRHHVLTWVKFL) are extracellular. The helical transmembrane segment at 211-231 (FGYLLPLLTMSSCYLCLIFKT) threads the bilayer. Over 232-247 (KKQNILISSKHLWMIL) the chain is Cytoplasmic. Residues 248 to 268 (SVVIAFMVCWTPFHLFSIWEL) form a helical membrane-spanning segment. Over 269-286 (SIHHNSSFQNVLQGGIPL) the chain is Extracellular. A helical membrane pass occupies residues 287 to 307 (STGLAFLNSCLNPILYVLISK). Residues 308–353 (KFQARFRASVAEVLKRSLWEASCSGTVSEQLRSAETKSLSLLETAQ) lie on the Cytoplasmic side of the membrane.

This sequence belongs to the chemokine-like receptor (CMKLR) family.

The protein resides in the cell membrane. Its function is as follows. Receptor for chemoattractant adipokine chemerin/RARRES2 suggesting a role for this receptor in the regulation of inflammation and energy homesotasis. Signals mainly via beta-arrestin pathway. Binding of RARRES2 activates weakly G proteins, calcium mobilization and MAPK1/MAPK3 (ERK1/2) phosphorylation too. Acts also as a receptor for TAFA1, mediates its effects on neuronal stem-cell proliferation and differentiation via the activation of ROCK/ERK and ROCK/STAT3 signaling pathway. This Rattus norvegicus (Rat) protein is Chemerin-like receptor 2 (Cmklr2).